Consider the following 228-residue polypeptide: Ribonuclease 3 (228 aa).

The RNase III domain maps to 5–128; sequence LNRLMARLGY…IIGAMLLDGG (124 aa). Residue Glu41 participates in Mg(2+) binding. Asp45 is a catalytic residue. Residues Asp114 and Glu117 each coordinate Mg(2+). Glu117 is a catalytic residue. The 71-residue stretch at 155–225 folds into the DRBM domain; it reads DAKTRLQEWL…ASLALEWLEQ (71 aa).

This sequence belongs to the ribonuclease III family. In terms of assembly, homodimer. Requires Mg(2+) as cofactor.

It is found in the cytoplasm. The catalysed reaction is Endonucleolytic cleavage to 5'-phosphomonoester.. Functionally, digests double-stranded RNA. Involved in the processing of primary rRNA transcript to yield the immediate precursors to the large and small rRNAs (23S and 16S). Processes some mRNAs, and tRNAs when they are encoded in the rRNA operon. Processes pre-crRNA and tracrRNA of type II CRISPR loci if present in the organism. In Alcanivorax borkumensis (strain ATCC 700651 / DSM 11573 / NCIMB 13689 / SK2), this protein is Ribonuclease 3.